The chain runs to 254 residues: 5'-nucleotidase SurE (254 aa).

A divalent metal cation-binding residues include D8, D9, S40, and N93.

This sequence belongs to the SurE nucleotidase family. Requires a divalent metal cation as cofactor.

It is found in the cytoplasm. The enzyme catalyses a ribonucleoside 5'-phosphate + H2O = a ribonucleoside + phosphate. Its function is as follows. Nucleotidase that shows phosphatase activity on nucleoside 5'-monophosphates. In Actinobacillus pleuropneumoniae serotype 5b (strain L20), this protein is 5'-nucleotidase SurE.